Reading from the N-terminus, the 139-residue chain is ATP synthase epsilon chain (139 aa).

Belongs to the ATPase epsilon chain family. As to quaternary structure, F-type ATPases have 2 components, CF(1) - the catalytic core - and CF(0) - the membrane proton channel. CF(1) has five subunits: alpha(3), beta(3), gamma(1), delta(1), epsilon(1). CF(0) has three main subunits: a, b and c.

The protein localises to the cell membrane. Functionally, produces ATP from ADP in the presence of a proton gradient across the membrane. This chain is ATP synthase epsilon chain, found in Symbiobacterium thermophilum (strain DSM 24528 / JCM 14929 / IAM 14863 / T).